The sequence spans 193 residues: Pilin-like protein PilA2 (193 aa).

Positions 1–4 (MRKG) are cleaved as a propeptide — leader sequence. N-methylleucine is present on Leu5. A helical transmembrane segment spans residues 5 to 25 (LTLVEVLVTLVIMGIAFAALL).

It is found in the cell inner membrane. The protein localises to the cell outer membrane. It localises to the periplasm. In terms of biological role, plays an essential role in natural DNA transformation but is not required for pilus biogenesis. The protein is Pilin-like protein PilA2 (pilA2) of Thermus thermophilus (strain ATCC BAA-163 / DSM 7039 / HB27).